The primary structure comprises 285 residues: MKYIGAHVSAAGGLANAPARAAEIGATAFALFTKNQRQWRAAPLTPQVIDDFKIACEKYHFSAAQILPHDSYLINLGHPVSEALEKSRDAFLDEMQRCEQLGLTLLNFHPGSHLMQIAQEDCLARIAESINIALAQTEGVTAVIENTAGQGSNLGFEFEQLAAIIDGVEDKSRVGVCIDTCHAFAAGYDLRTPEACEKTFAEFGKIVGFQYLRGMHLNDAKSAFGSRVDRHHSLGEGNIGHDAFRWIMQDARFDGIPLILETINPDIWAEEIAWLKAQQIAEAMA.

Residues histidine 69, histidine 109, glutamate 145, aspartate 179, histidine 182, histidine 216, aspartate 229, histidine 231, and glutamate 261 each contribute to the Zn(2+) site.

The protein belongs to the AP endonuclease 2 family. Zn(2+) serves as cofactor.

It carries out the reaction Endonucleolytic cleavage to 5'-phosphooligonucleotide end-products.. Endonuclease IV plays a role in DNA repair. It cleaves phosphodiester bonds at apurinic or apyrimidinic (AP) sites, generating a 3'-hydroxyl group and a 5'-terminal sugar phosphate. This is Probable endonuclease 4 from Salmonella typhi.